The following is a 163-amino-acid chain: Nucleotide-binding protein AM1_1863 (163 aa).

It belongs to the YajQ family.

Functionally, nucleotide-binding protein. In Acaryochloris marina (strain MBIC 11017), this protein is Nucleotide-binding protein AM1_1863.